We begin with the raw amino-acid sequence, 435 residues long: Citrate synthase (435 aa).

Residues histidine 311 and aspartate 370 contribute to the active site.

The protein belongs to the citrate synthase family.

It carries out the reaction oxaloacetate + acetyl-CoA + H2O = citrate + CoA + H(+). It functions in the pathway carbohydrate metabolism; tricarboxylic acid cycle; isocitrate from oxaloacetate: step 1/2. This Rickettsia slovaca (strain 13-B) protein is Citrate synthase (gltA).